A 223-amino-acid chain; its full sequence is GTP-binding nuclear protein Ran (223 aa).

The Small GTPase Ran-type domain occupies 8 to 172 (VVAEFKLVLV…LWILRKLTGD (165 aa)). 19–26 (DGGVGKTT) lines the GTP pocket. The interval 38–46 (KRYIATQGV) is switch-I. GTP is bound by residues glycine 69, 123–126 (NKVD), and 151–153 (SAK). The tract at residues 69 to 85 (GQEKLGGLREGYYIGAD) is switch-II.

This sequence belongs to the small GTPase superfamily. Ran family. As to quaternary structure, monomer. Found in a nuclear export complex with RanGTP, exportin and pre-miRNA.

The protein localises to the nucleus. In terms of biological role, GTP-binding protein involved in nucleocytoplasmic transport. Required for the import of protein into the nucleus and also for RNA export. Involved in chromatin condensation and control of cell cycle. The chain is GTP-binding nuclear protein Ran from Tetrahymena pyriformis.